The sequence spans 503 residues: Galactose/methyl galactoside import ATP-binding protein MglA 2 (503 aa).

ABC transporter domains follow at residues 11 to 246 and 257 to 503; these read LEMT…VGRE and TPKE…SRYL. Residue 43–50 participates in ATP binding; sequence GENGAGKS.

This sequence belongs to the ABC transporter superfamily. Galactose/methyl galactoside importer (TC 3.A.1.2.3) family. In terms of assembly, the complex is composed of one ATP-binding protein (MglA), two transmembrane proteins (MglC) and a solute-binding protein (MglB).

It localises to the cell inner membrane. The catalysed reaction is D-galactose(out) + ATP + H2O = D-galactose(in) + ADP + phosphate + H(+). The enzyme catalyses methyl beta-D-galactoside(out) + ATP + H2O = methyl beta-D-galactoside(in) + ADP + phosphate + H(+). Functionally, part of the ABC transporter complex MglABC involved in galactose/methyl galactoside import. Responsible for energy coupling to the transport system. In Photobacterium profundum (strain SS9), this protein is Galactose/methyl galactoside import ATP-binding protein MglA 2.